The sequence spans 257 residues: Phycoerythrobilin:ferredoxin oxidoreductase (257 aa).

Belongs to the HY2 family.

The catalysed reaction is (3Z)-phycoerythrobilin + oxidized 2[4Fe-4S]-[ferredoxin] = 15,16-dihydrobiliverdin + reduced 2[4Fe-4S]-[ferredoxin] + 2 H(+). Catalyzes the two-electron reduction of the C2 and C3(1) diene system of 15,16-dihydrobiliverdin. This is Phycoerythrobilin:ferredoxin oxidoreductase from Prochlorococcus marinus (strain MIT 9303).